We begin with the raw amino-acid sequence, 419 residues long: Zinc finger protein Pegasus (419 aa).

Lys5 participates in a covalent cross-link: Glycyl lysine isopeptide (Lys-Gly) (interchain with G-Cter in SUMO2). C2H2-type zinc fingers lie at residues Leu82 to His104, His110 to His132, and Tyr138 to His161. Lys185 is covalently cross-linked (Glycyl lysine isopeptide (Lys-Gly) (interchain with G-Cter in SUMO2)). A compositionally biased stretch (polar residues) spans Gln223–Thr236. Disordered regions lie at residues Gln223–Glu245 and Met288–Pro356. Low complexity predominate over residues Gln289–Ala311. A compositionally biased stretch (polar residues) spans Ser332–Ser349. C2H2-type zinc fingers lie at residues His364–His386 and Phe392–His416.

It belongs to the Ikaros C2H2-type zinc-finger protein family. As to quaternary structure, self-associates. Interacts with other family members; IKZF1, IKZF2, IKZF3 and IKZF4.

The protein localises to the nucleus. In terms of biological role, transcriptional repressor that binds the core 5'GNNTGTNG-3' DNA consensus sequence. Involved in megakaryocyte differentiation. The protein is Zinc finger protein Pegasus (IKZF5) of Bos taurus (Bovine).